The following is a 211-amino-acid chain: Probable cytokinin riboside 5'-monophosphate phosphoribohydrolase LOGL3 (211 aa).

Substrate contacts are provided by residues glutamate 84, 102 to 103 (RK), 119 to 125 (GYGTLEE), and threonine 131.

It belongs to the LOG family. In terms of tissue distribution, expressed in roots, leaves, stems, tiller buds, shoot apex, immature inflorescences and flowers.

The enzyme catalyses N(6)-(dimethylallyl)adenosine 5'-phosphate + H2O = N(6)-dimethylallyladenine + D-ribose 5-phosphate. It carries out the reaction 9-ribosyl-trans-zeatin 5'-phosphate + H2O = trans-zeatin + D-ribose 5-phosphate. Functionally, cytokinin-activating enzyme working in the direct activation pathway. Phosphoribohydrolase that converts inactive cytokinin nucleotides to the biologically active free-base forms. This chain is Probable cytokinin riboside 5'-monophosphate phosphoribohydrolase LOGL3 (LOGL3), found in Oryza sativa subsp. japonica (Rice).